Here is a 445-residue protein sequence, read N- to C-terminus: Phosphoglucosamine mutase (445 aa).

S100 functions as the Phosphoserine intermediate in the catalytic mechanism. S100, D240, D242, and D244 together coordinate Mg(2+). S100 carries the post-translational modification Phosphoserine.

This sequence belongs to the phosphohexose mutase family. The cofactor is Mg(2+). Activated by phosphorylation.

It catalyses the reaction alpha-D-glucosamine 1-phosphate = D-glucosamine 6-phosphate. Its function is as follows. Catalyzes the conversion of glucosamine-6-phosphate to glucosamine-1-phosphate. This Pelotomaculum thermopropionicum (strain DSM 13744 / JCM 10971 / SI) protein is Phosphoglucosamine mutase.